Here is a 273-residue protein sequence, read N- to C-terminus: Kit ligand (273 aa).

The signal sequence occupies residues 1-25; that stretch reads MKKTQTWIITCIYLQLLLFNPLVKT. Gln-26 carries the post-translational modification Pyrrolidone carboxylic acid. Over 26–214 the chain is Extracellular; it reads QEICRNPVTD…AKSPEDPGLQ (189 aa). Disulfide bonds link Cys-29–Cys-114 and Cys-68–Cys-163. Asn-90 carries N-linked (GlcNAc...) asparagine; partial glycosylation. Residue Asn-145 is glycosylated (N-linked (GlcNAc...) asparagine). An O-linked (GalNAc...) serine glycan is attached at Ser-167. O-linked (GalNAc...) threonine glycosylation is found at Thr-168 and Thr-180. Positions 190–211 are disordered; it reads ASSLRNDSSSSNRKAAKSPEDP. The segment covering 191-202 has biased composition (low complexity); sequence SSLRNDSSSSNR. Asn-195 carries N-linked (GlcNAc...) asparagine glycosylation. A helical transmembrane segment spans residues 215–237; sequence WTAMALPALISLVIGFAFGALYW. The Cytoplasmic portion of the chain corresponds to 238-273; that stretch reads KKKQSSLTRAVENIQINEEDNEISMLQQKEREFQEV.

The protein belongs to the SCF family. In terms of assembly, homodimer, non-covalently linked. Heterotetramer with KIT, binding two KIT molecules; thereby mediates KIT dimerization and subsequent activation by autophosphorylation. Post-translationally, a soluble form is produced by proteolytic processing of isoform 1 in the extracellular domain. The identity of N- and O-linked saccharides is not reported in PubMed:1708771. The O-linked polysaccharides are probably the mucin type linked to GalNAc.

It is found in the cell membrane. It localises to the cytoplasm. The protein resides in the cytoskeleton. Its subcellular location is the cell projection. The protein localises to the lamellipodium. It is found in the filopodium. It localises to the secreted. In terms of biological role, ligand for the receptor-type protein-tyrosine kinase KIT. Plays an essential role in the regulation of cell survival and proliferation, hematopoiesis, stem cell maintenance, gametogenesis, mast cell development, migration and function, and in melanogenesis. KITLG/SCF binding can activate several signaling pathways. Promotes phosphorylation of PIK3R1, the regulatory subunit of phosphatidylinositol 3-kinase, and subsequent activation of the kinase AKT1. KITLG/SCF and KIT also transmit signals via GRB2 and activation of RAS, RAF1 and the MAP kinases MAPK1/ERK2 and/or MAPK3/ERK1. KITLG/SCF and KIT promote activation of STAT family members STAT1, STAT3 and STAT5. KITLG/SCF and KIT promote activation of PLCG1, leading to the production of the cellular signaling molecules diacylglycerol and inositol 1,4,5-trisphosphate. KITLG/SCF acts synergistically with other cytokines, probably interleukins. The protein is Kit ligand (Kitlg) of Rattus norvegicus (Rat).